Consider the following 510-residue polypeptide: Cytochrome P450 11B2, mitochondrial (510 aa).

Residues 1–34 constitute a mitochondrion transit peptide; that stretch reads MGACDNDFIELHSRVTADVWLARPWQCLHRTRAL. Position 391 (phenylalanine 391) interacts with 21-hydroxyprogesterone. Cysteine 457 contacts heme.

It belongs to the cytochrome P450 family. Heme is required as a cofactor. In terms of tissue distribution, adrenal cortex.

The protein localises to the mitochondrion inner membrane. It carries out the reaction a steroid + 2 reduced [adrenodoxin] + O2 + 2 H(+) = an 11beta-hydroxysteroid + 2 oxidized [adrenodoxin] + H2O. The enzyme catalyses 21-hydroxyprogesterone + 2 reduced [adrenodoxin] + O2 + 2 H(+) = corticosterone + 2 oxidized [adrenodoxin] + H2O. The catalysed reaction is corticosterone + 2 reduced [adrenodoxin] + O2 + 2 H(+) = 18-hydroxycorticosterone + 2 oxidized [adrenodoxin] + H2O. It catalyses the reaction 18-hydroxycorticosterone + 2 reduced [adrenodoxin] + O2 + 2 H(+) = aldosterone + 2 oxidized [adrenodoxin] + 2 H2O. It carries out the reaction 11-deoxycortisol + 2 reduced [adrenodoxin] + O2 + 2 H(+) = cortisol + 2 oxidized [adrenodoxin] + H2O. The enzyme catalyses cortisol + 2 reduced [adrenodoxin] + O2 + 2 H(+) = 18-hydroxycortisol + 2 oxidized [adrenodoxin] + H2O. The catalysed reaction is 21-hydroxyprogesterone + 2 reduced [adrenodoxin] + O2 + 2 H(+) = 18-hydroxy-11-deoxycorticosterone + 2 oxidized [adrenodoxin] + H2O. It catalyses the reaction 18-hydroxycortisol + 2 reduced [adrenodoxin] + O2 + 2 H(+) = 18-oxocortisol + 2 oxidized [adrenodoxin] + 2 H2O. It functions in the pathway steroid biosynthesis. Its function is as follows. A cytochrome P450 monooxygenase that catalyzes the biosynthesis of aldosterone, the main mineralocorticoid responsible for salt and water homeostasis. Catalyzes three sequential oxidative reactions of 11-deoxycorticosterone (21-hydroxyprogesterone), namely 11-beta hydroxylation, followed by two successive oxidations at C18 yielding 18-hydroxy and then 18-oxo intermediates (that do not leave the enzyme active site during the consecutive hydroxylation reactions), and end with the formation of aldosterone. Can also produce 18-hydroxycortisol and 18-oxocortisol, derived from successive oxidations of cortisol at C18, normally found at very low levels, but significantly increased in primary aldosteronism, the most common form of secondary hypertension. Mechanistically, uses molecular oxygen inserting one oxygen atom into a substrate and reducing the second into a water molecule. Two electrons are provided by NADPH via a two-protein mitochondrial transfer system comprising flavoprotein FDXR (adrenodoxin/ferredoxin reductase) and nonheme iron-sulfur protein FDX1 or FDX2 (adrenodoxin/ferredoxin). Could also be involved in the androgen metabolic pathway. The sequence is that of Cytochrome P450 11B2, mitochondrial (Cyp11b2) from Rattus norvegicus (Rat).